The sequence spans 170 residues: Cysteine-rich uncharacterized protein 241L (170 aa).

The sequence is that of Cysteine-rich uncharacterized protein 241L from Acheta domesticus (House cricket).